The chain runs to 427 residues: Kallistatin (427 aa).

Positions 1-20 (MHLIDYLLLLLVGLLALSHG) are cleaved as a signal peptide. N-linked (GlcNAc...) asparagine glycosylation is found at Asn-33, Asn-108, Asn-157, and Asn-238.

It belongs to the serpin family. In terms of assembly, monomer and some homodimers.

The protein resides in the secreted. Inhibits human amidolytic and kininogenase activities of tissue kallikrein. The sequence is that of Kallistatin (SERPINA4) from Pongo abelii (Sumatran orangutan).